A 481-amino-acid polypeptide reads, in one-letter code: Alkaline protease secretion protein AprF (481 aa).

A disordered region spans residues 462-481 (PAPLHTLSKTDTEENRSALN). Positions 469 to 481 (SKTDTEENRSALN) are enriched in basic and acidic residues.

It belongs to the outer membrane factor (OMF) (TC 1.B.17) family.

The protein resides in the cell outer membrane. Involved in the secretion of alkaline protease. The polypeptide is Alkaline protease secretion protein AprF (aprF) (Pseudomonas aeruginosa (strain ATCC 15692 / DSM 22644 / CIP 104116 / JCM 14847 / LMG 12228 / 1C / PRS 101 / PAO1)).